The primary structure comprises 407 residues: Phosphopentomutase (407 aa).

Positions 10, 306, 311, 347, 348, and 359 each coordinate Mn(2+).

It belongs to the phosphopentomutase family. The cofactor is Mn(2+).

It is found in the cytoplasm. The enzyme catalyses 2-deoxy-alpha-D-ribose 1-phosphate = 2-deoxy-D-ribose 5-phosphate. It catalyses the reaction alpha-D-ribose 1-phosphate = D-ribose 5-phosphate. The protein operates within carbohydrate degradation; 2-deoxy-D-ribose 1-phosphate degradation; D-glyceraldehyde 3-phosphate and acetaldehyde from 2-deoxy-alpha-D-ribose 1-phosphate: step 1/2. In terms of biological role, isomerase that catalyzes the conversion of deoxy-ribose 1-phosphate (dRib-1-P) and ribose 1-phosphate (Rib-1-P) to deoxy-ribose 5-phosphate (dRib-5-P) and ribose 5-phosphate (Rib-5-P), respectively. This Salmonella paratyphi C (strain RKS4594) protein is Phosphopentomutase.